The primary structure comprises 393 residues: MTTIGTPLTASATKILLLGSGELGKEVAIEAQRLGVEVIAVDRYPNAPAMQVAHRRHVVSMLDAPALRSIIEAEKPDYIVPEIEAIATEELIKLEAEGYPVVPTARAARLTMDREGIRRLAAEELGLVTSPYRFADTREEFLAACDAVGFPCVVKPVMSSSGKGQSVARDAASAEASWDYAQTAGRAGAGRVIVEGFVDFDYEITLLTVRHAGGTSFCAPIGHRQEKGDYRESWQPHPMSQSALAKAQAMAGAVTEALGGRGIFGVELFIKGDAVIFSEVSPRPHDTGMVTLISQDLSEFALHVRAILGLPIPAIRLYGPAASRVILGEGDSTSPRFAIDPAALAQPDTAIKLFGKPELHGTRRLGVALALGRDVEEAKAKAIAAASHVKVEL.

Residues 22–23 (EL) and E82 contribute to the N(1)-(5-phospho-beta-D-ribosyl)glycinamide site. ATP contacts are provided by residues R114, K155, 160 to 165 (SSGKGQ), 195 to 198 (EGFV), and E203. In terms of domain architecture, ATP-grasp spans 119-308 (RLAAEELGLV…EFALHVRAIL (190 aa)). 2 residues coordinate Mg(2+): E267 and E279. Residues D286, K356, and 363–364 (RR) each bind N(1)-(5-phospho-beta-D-ribosyl)glycinamide.

It belongs to the PurK/PurT family. Homodimer.

It catalyses the reaction N(1)-(5-phospho-beta-D-ribosyl)glycinamide + formate + ATP = N(2)-formyl-N(1)-(5-phospho-beta-D-ribosyl)glycinamide + ADP + phosphate + H(+). It functions in the pathway purine metabolism; IMP biosynthesis via de novo pathway; N(2)-formyl-N(1)-(5-phospho-D-ribosyl)glycinamide from N(1)-(5-phospho-D-ribosyl)glycinamide (formate route): step 1/1. Functionally, involved in the de novo purine biosynthesis. Catalyzes the transfer of formate to 5-phospho-ribosyl-glycinamide (GAR), producing 5-phospho-ribosyl-N-formylglycinamide (FGAR). Formate is provided by PurU via hydrolysis of 10-formyl-tetrahydrofolate. The protein is Formate-dependent phosphoribosylglycinamide formyltransferase of Solidesulfovibrio magneticus (strain ATCC 700980 / DSM 13731 / RS-1) (Desulfovibrio magneticus).